Consider the following 321-residue polypeptide: GDP-L-fucose synthase (321 aa).

Residue 14-20 (GGSGLVG) participates in NADP(+) binding. Y143 (proton donor/acceptor) is an active-site residue. Residues K147, 170–173 (PTNV), and H186 contribute to the NADP(+) site. Substrate contacts are provided by K194, W208, R215, and D277.

Belongs to the NAD(P)-dependent epimerase/dehydratase family. Fucose synthase subfamily. Homodimer.

The enzyme catalyses GDP-beta-L-fucose + NADP(+) = GDP-4-dehydro-alpha-D-rhamnose + NADPH + H(+). It functions in the pathway nucleotide-sugar biosynthesis; GDP-L-fucose biosynthesis via de novo pathway; GDP-L-fucose from GDP-alpha-D-mannose: step 2/2. Its function is as follows. Catalyzes the two-step NADP-dependent conversion of GDP-4-dehydro-6-deoxy-D-mannose to GDP-fucose, involving an epimerase and a reductase reaction. The chain is GDP-L-fucose synthase (GFUS) from Pongo abelii (Sumatran orangutan).